Reading from the N-terminus, the 71-residue chain is Small ribosomal subunit protein bS21 (71 aa).

This sequence belongs to the bacterial ribosomal protein bS21 family.

In Cellvibrio japonicus (strain Ueda107) (Pseudomonas fluorescens subsp. cellulosa), this protein is Small ribosomal subunit protein bS21.